A 95-amino-acid polypeptide reads, in one-letter code: Small ribosomal subunit protein bS6 (95 aa).

This sequence belongs to the bacterial ribosomal protein bS6 family.

In terms of biological role, binds together with bS18 to 16S ribosomal RNA. This Clostridium kluyveri (strain NBRC 12016) protein is Small ribosomal subunit protein bS6.